Consider the following 203-residue polypeptide: Thymidylate kinase (203 aa).

14–21 serves as a coordination point for ATP; the sequence is GGEGIGKS.

It belongs to the thymidylate kinase family.

The enzyme catalyses dTMP + ATP = dTDP + ADP. In terms of biological role, phosphorylation of dTMP to form dTDP in both de novo and salvage pathways of dTTP synthesis. This Rickettsia peacockii (strain Rustic) protein is Thymidylate kinase.